Consider the following 350-residue polypeptide: Histidinol-phosphate aminotransferase (350 aa).

The residue at position 212 (K212) is an N6-(pyridoxal phosphate)lysine.

It belongs to the class-II pyridoxal-phosphate-dependent aminotransferase family. Histidinol-phosphate aminotransferase subfamily. As to quaternary structure, homodimer. It depends on pyridoxal 5'-phosphate as a cofactor.

The enzyme catalyses L-histidinol phosphate + 2-oxoglutarate = 3-(imidazol-4-yl)-2-oxopropyl phosphate + L-glutamate. The protein operates within amino-acid biosynthesis; L-histidine biosynthesis; L-histidine from 5-phospho-alpha-D-ribose 1-diphosphate: step 7/9. The chain is Histidinol-phosphate aminotransferase from Geobacter sulfurreducens (strain ATCC 51573 / DSM 12127 / PCA).